A 462-amino-acid chain; its full sequence is Myrosinase-binding protein 1 (462 aa).

Positions 1 to 23 (MSTGGPQKLEAQGGKEGKEWDDG) are disordered. 3 consecutive Jacalin-type lectin domains span residues 6–148 (PQKL…YFAP), 157–300 (PNKV…YFAP), and 310–453 (TKKL…HIVP). Basic and acidic residues predominate over residues 13-23 (GGKEGKEWDDG).

Belongs to the jacalin lectin family. Expressed exclusively in flowers, in male and female organs, petals and pedicels. Not detected in pollen grains or sepals.

In Arabidopsis thaliana (Mouse-ear cress), this protein is Myrosinase-binding protein 1 (MBP1).